The chain runs to 258 residues: Imidazole glycerol phosphate synthase subunit HisF (258 aa).

Residues aspartate 11 and aspartate 130 contribute to the active site.

This sequence belongs to the HisA/HisF family. Heterodimer of HisH and HisF.

It localises to the cytoplasm. The catalysed reaction is 5-[(5-phospho-1-deoxy-D-ribulos-1-ylimino)methylamino]-1-(5-phospho-beta-D-ribosyl)imidazole-4-carboxamide + L-glutamine = D-erythro-1-(imidazol-4-yl)glycerol 3-phosphate + 5-amino-1-(5-phospho-beta-D-ribosyl)imidazole-4-carboxamide + L-glutamate + H(+). It participates in amino-acid biosynthesis; L-histidine biosynthesis; L-histidine from 5-phospho-alpha-D-ribose 1-diphosphate: step 5/9. Functionally, IGPS catalyzes the conversion of PRFAR and glutamine to IGP, AICAR and glutamate. The HisF subunit catalyzes the cyclization activity that produces IGP and AICAR from PRFAR using the ammonia provided by the HisH subunit. The polypeptide is Imidazole glycerol phosphate synthase subunit HisF (Escherichia coli (strain ATCC 8739 / DSM 1576 / NBRC 3972 / NCIMB 8545 / WDCM 00012 / Crooks)).